The following is a 647-amino-acid chain: Threonine--tRNA ligase (647 aa).

One can recognise a TGS domain in the interval 1 to 61; sequence MINITFPDGA…TEDGSIEIVT (61 aa). The segment at 242-540 is catalytic; it reads DHRKLGKELD…LIENYKGAFP (299 aa). Residues Cys-336, His-387, and His-517 each contribute to the Zn(2+) site.

This sequence belongs to the class-II aminoacyl-tRNA synthetase family. In terms of assembly, homodimer. It depends on Zn(2+) as a cofactor.

The protein resides in the cytoplasm. It catalyses the reaction tRNA(Thr) + L-threonine + ATP = L-threonyl-tRNA(Thr) + AMP + diphosphate + H(+). In terms of biological role, catalyzes the attachment of threonine to tRNA(Thr) in a two-step reaction: L-threonine is first activated by ATP to form Thr-AMP and then transferred to the acceptor end of tRNA(Thr). Also edits incorrectly charged L-seryl-tRNA(Thr). The sequence is that of Threonine--tRNA ligase from Streptococcus pneumoniae (strain ATCC 700669 / Spain 23F-1).